Here is a 116-residue protein sequence, read N- to C-terminus: Large ribosomal subunit protein bL19 (116 aa).

It belongs to the bacterial ribosomal protein bL19 family.

Its function is as follows. This protein is located at the 30S-50S ribosomal subunit interface and may play a role in the structure and function of the aminoacyl-tRNA binding site. The protein is Large ribosomal subunit protein bL19 of Flavobacterium psychrophilum (strain ATCC 49511 / DSM 21280 / CIP 103535 / JIP02/86).